The chain runs to 121 residues: uncharacterized protein (121 aa).

This is an uncharacterized protein from Aquifex aeolicus (strain VF5).